The sequence spans 315 residues: Ribosomal RNA small subunit methyltransferase H (315 aa).

Residues 37-39 (GGH), D57, F83, D105, and Q112 contribute to the S-adenosyl-L-methionine site. The segment at 296–315 (EVKANPRSRSAVMRVAEKVR) is disordered.

It belongs to the methyltransferase superfamily. RsmH family.

Its subcellular location is the cytoplasm. The catalysed reaction is cytidine(1402) in 16S rRNA + S-adenosyl-L-methionine = N(4)-methylcytidine(1402) in 16S rRNA + S-adenosyl-L-homocysteine + H(+). Specifically methylates the N4 position of cytidine in position 1402 (C1402) of 16S rRNA. This is Ribosomal RNA small subunit methyltransferase H from Stutzerimonas stutzeri (strain A1501) (Pseudomonas stutzeri).